Reading from the N-terminus, the 119-residue chain is MPRVKGGTVTRKRRKKILKLAKGYRGAKHLLFKSANTQVMVSYRYAFRDRRQRKRDFRKLWIARINAAARMNDMSYSQLMHGLRVAEIDMNRKMLADLAVNDAAAFTSVVEAAKAALNK.

This sequence belongs to the bacterial ribosomal protein bL20 family.

In terms of biological role, binds directly to 23S ribosomal RNA and is necessary for the in vitro assembly process of the 50S ribosomal subunit. It is not involved in the protein synthesizing functions of that subunit. The sequence is that of Large ribosomal subunit protein bL20 from Latilactobacillus sakei subsp. sakei (strain 23K) (Lactobacillus sakei subsp. sakei).